The sequence spans 171 residues: Cytochrome c oxidase subunit 5, mitochondrial (171 aa).

The N-terminal 27 residues, Met-1 to Ala-27, are a transit peptide targeting the mitochondrion. At Ala-28–Lys-100 the chain is on the mitochondrial matrix side. The chain crosses the membrane as a helical span at residues Val-101 to Ala-123. Residues Lys-124–Ala-171 lie on the Mitochondrial intermembrane side of the membrane. The disordered stretch occupies residues Gln-145–Ala-171.

This sequence belongs to the cytochrome c oxidase IV family. As to quaternary structure, component of the cytochrome c oxidase (complex IV, CIV), a multisubunit enzyme composed of 11 subunits. The complex is composed of a catalytic core of 3 subunits Cox1, Cox2 and Cox3, encoded in the mitochondrial DNA, and 8 supernumerary subunits Cox4, Cox5a/Cox5, Cox6, Cox7, Cox8, Cox7a/Cox9, Cox6b/Cox12 and Cox6a/Cox13, which are encoded in the nuclear genome. The complex exists as a monomer or a dimer and forms respiratory supercomplexes (SCs) in the inner mitochondrial membrane with NADH-ubiquinone oxidoreductase (complex I, CI) and ubiquinol-cytochrome c oxidoreductase (cytochrome b-c1 complex, complex III, CIII), resulting in various different assemblies (supercomplexes I(1)IV(1), I(1)III(3)IV(2), III(2)IV(1) and III(2)IV(2) as well as larger supercomplexes of compositions like I(1)III(2)IV(5-6)).

It localises to the mitochondrion inner membrane. It functions in the pathway energy metabolism; oxidative phosphorylation. Functionally, component of the cytochrome c oxidase, the last enzyme in the mitochondrial electron transport chain which drives oxidative phosphorylation. The respiratory chain contains 3 multisubunit complexes succinate dehydrogenase (complex II, CII), ubiquinol-cytochrome c oxidoreductase (cytochrome b-c1 complex, complex III, CIII) and cytochrome c oxidase (complex IV, CIV), that cooperate to transfer electrons derived from NADH and succinate to molecular oxygen, creating an electrochemical gradient over the inner membrane that drives transmembrane transport and the ATP synthase. Cytochrome c oxidase is the component of the respiratory chain that catalyzes the reduction of oxygen to water. Electrons originating from reduced cytochrome c in the intermembrane space (IMS) are transferred via the dinuclear copper A center (CU(A)) of Cox2 and heme A of Cox1 to the active site in Cox1, a binuclear center (BNC) formed by heme A3 and copper B (CU(B)). The BNC reduces molecular oxygen to 2 water molecules using 4 electrons from cytochrome c in the IMS and 4 protons from the mitochondrial matrix. The chain is Cytochrome c oxidase subunit 5, mitochondrial (cya-4) from Neurospora crassa (strain ATCC 24698 / 74-OR23-1A / CBS 708.71 / DSM 1257 / FGSC 987).